The sequence spans 114 residues: MRNTLIAVTTVSLLAFSTASLAGPSRTTKGALLGATAGLLSGNGVNGVLKGAALGAGVGAISEKGRKGKKARKGATIGATVGAVAGVLSGNGIEGAIKGAVVGGAGGAIIGRIQ.

This sequence belongs to the UPF0757 family.

This Edwardsiella ictaluri (strain 93-146) protein is UPF0757 protein YmgG.